Here is a 662-residue protein sequence, read N- to C-terminus: Transketolase (662 aa).

Histidine 28 provides a ligand contact to substrate. Thiamine diphosphate is bound by residues histidine 68 and 115–117; that span reads GPL. Aspartate 156 is a Mg(2+) binding site. Glycine 157 and asparagine 186 together coordinate thiamine diphosphate. Residues asparagine 186 and isoleucine 188 each contribute to the Mg(2+) site. Substrate is bound by residues histidine 261, arginine 356, and serine 383. Histidine 261 is a thiamine diphosphate binding site. Glutamate 410 functions as the Proton donor in the catalytic mechanism. Phenylalanine 436 serves as a coordination point for thiamine diphosphate. Substrate contacts are provided by histidine 460, aspartate 468, and arginine 519.

It belongs to the transketolase family. As to quaternary structure, homodimer. Mg(2+) is required as a cofactor. The cofactor is Ca(2+). Requires Mn(2+) as cofactor. It depends on Co(2+) as a cofactor. Thiamine diphosphate serves as cofactor.

It carries out the reaction D-sedoheptulose 7-phosphate + D-glyceraldehyde 3-phosphate = aldehydo-D-ribose 5-phosphate + D-xylulose 5-phosphate. Its pathway is carbohydrate biosynthesis; Calvin cycle. It participates in carbohydrate degradation; pentose phosphate pathway. Functionally, catalyzes the transfer of a two-carbon ketol group from a ketose donor to an aldose acceptor, via a covalent intermediate with the cofactor thiamine pyrophosphate. This Staphylococcus aureus (strain COL) protein is Transketolase (tkt).